The primary structure comprises 74 residues: Large ribosomal subunit protein bL31 (74 aa).

This sequence belongs to the bacterial ribosomal protein bL31 family. Type A subfamily. In terms of assembly, part of the 50S ribosomal subunit.

Binds the 23S rRNA. The polypeptide is Large ribosomal subunit protein bL31 (Synechococcus sp. (strain JA-2-3B'a(2-13)) (Cyanobacteria bacterium Yellowstone B-Prime)).